The primary structure comprises 208 residues: Protein-L-isoaspartate O-methyltransferase (208 aa).

Ser-59 is an active-site residue.

The protein belongs to the methyltransferase superfamily. L-isoaspartyl/D-aspartyl protein methyltransferase family.

Its subcellular location is the cytoplasm. It catalyses the reaction [protein]-L-isoaspartate + S-adenosyl-L-methionine = [protein]-L-isoaspartate alpha-methyl ester + S-adenosyl-L-homocysteine. Functionally, catalyzes the methyl esterification of L-isoaspartyl residues in peptides and proteins that result from spontaneous decomposition of normal L-aspartyl and L-asparaginyl residues. It plays a role in the repair and/or degradation of damaged proteins. The sequence is that of Protein-L-isoaspartate O-methyltransferase from Salmonella arizonae (strain ATCC BAA-731 / CDC346-86 / RSK2980).